We begin with the raw amino-acid sequence, 357 residues long: Fructose-bisphosphate aldolase, cytoplasmic isozyme 1 (357 aa).

Residues Arg-52 and Lys-142 each contribute to the substrate site. The active-site Proton acceptor is the Glu-183. Lys-225 serves as the catalytic Schiff-base intermediate with dihydroxyacetone-P.

It belongs to the class I fructose-bisphosphate aldolase family.

The protein resides in the cytoplasm. It catalyses the reaction beta-D-fructose 1,6-bisphosphate = D-glyceraldehyde 3-phosphate + dihydroxyacetone phosphate. It participates in carbohydrate degradation; glycolysis; D-glyceraldehyde 3-phosphate and glycerone phosphate from D-glucose: step 4/4. The chain is Fructose-bisphosphate aldolase, cytoplasmic isozyme 1 from Pisum sativum (Garden pea).